The following is a 293-amino-acid chain: 33 kDa chaperonin (293 aa).

Cystine bridges form between cysteine 229/cysteine 231 and cysteine 262/cysteine 265.

This sequence belongs to the HSP33 family. In terms of processing, under oxidizing conditions two disulfide bonds are formed involving the reactive cysteines. Under reducing conditions zinc is bound to the reactive cysteines and the protein is inactive.

The protein localises to the cytoplasm. In terms of biological role, redox regulated molecular chaperone. Protects both thermally unfolding and oxidatively damaged proteins from irreversible aggregation. Plays an important role in the bacterial defense system toward oxidative stress. This chain is 33 kDa chaperonin, found in Methylobacillus flagellatus (strain ATCC 51484 / DSM 6875 / VKM B-1610 / KT).